We begin with the raw amino-acid sequence, 138 residues long: Large ribosomal subunit protein uL16 (138 aa).

A compositionally biased stretch (basic residues) spans 1–15; sequence MLSPRKVKYRKKQRG. The interval 1–21 is disordered; the sequence is MLSPRKVKYRKKQRGRLSGEA.

Belongs to the universal ribosomal protein uL16 family. In terms of assembly, part of the 50S ribosomal subunit.

In terms of biological role, binds 23S rRNA and is also seen to make contacts with the A and possibly P site tRNAs. The protein is Large ribosomal subunit protein uL16 of Borrelia duttonii (strain Ly).